The primary structure comprises 162 residues: 6,7-dimethyl-8-ribityllumazine synthase (162 aa).

Residues Phe-22, 56 to 58 (TFE), and 80 to 82 (AVI) contribute to the 5-amino-6-(D-ribitylamino)uracil site. 85 to 86 (GT) serves as a coordination point for (2S)-2-hydroxy-3-oxobutyl phosphate. His-88 (proton donor) is an active-site residue. Met-113 contacts 5-amino-6-(D-ribitylamino)uracil. Arg-127 is a binding site for (2S)-2-hydroxy-3-oxobutyl phosphate.

The protein belongs to the DMRL synthase family.

It catalyses the reaction (2S)-2-hydroxy-3-oxobutyl phosphate + 5-amino-6-(D-ribitylamino)uracil = 6,7-dimethyl-8-(1-D-ribityl)lumazine + phosphate + 2 H2O + H(+). It functions in the pathway cofactor biosynthesis; riboflavin biosynthesis; riboflavin from 2-hydroxy-3-oxobutyl phosphate and 5-amino-6-(D-ribitylamino)uracil: step 1/2. Its function is as follows. Catalyzes the formation of 6,7-dimethyl-8-ribityllumazine by condensation of 5-amino-6-(D-ribitylamino)uracil with 3,4-dihydroxy-2-butanone 4-phosphate. This is the penultimate step in the biosynthesis of riboflavin. The chain is 6,7-dimethyl-8-ribityllumazine synthase from Anaeromyxobacter dehalogenans (strain 2CP-C).